The chain runs to 100 residues: Cytochrome bo(3) ubiquinol oxidase subunit 4 (100 aa).

The Cytoplasmic portion of the chain corresponds to 1–9; it reads MLKNRYLKY. Residues 10-32 form a helical membrane-spanning segment; sequence LFILILLSILSIMPIFAIIYRIF. Topologically, residues 33 to 36 are extracellular; that stretch reads SRNY. A helical membrane pass occupies residues 37–59; sequence LYAFIIVCLFFQILAHIKFFLNL. At 60 to 68 the chain is on the cytoplasmic side; it reads DFSLEQRWK. The helical transmembrane segment at 69–90 threads the bilayer; it reads LISVIFSLVVGLIILLGSIWVI. The Extracellular segment spans residues 91–100; sequence KNLNNNLCIM.

It belongs to the cytochrome c oxidase bacterial subunit 4 family. As to quaternary structure, heterooctamer of two A chains, two B chains, two C chains and two D chains.

The protein resides in the cell membrane. Its function is as follows. Cytochrome bo(3) ubiquinol terminal oxidase is the component of the aerobic respiratory chain of E.coli that predominates when cells are grown at high aeration. Has proton pump activity across the membrane in addition to electron transfer, pumping 2 protons/electron. The polypeptide is Cytochrome bo(3) ubiquinol oxidase subunit 4 (cyoD) (Buchnera aphidicola subsp. Baizongia pistaciae (strain Bp)).